Consider the following 470-residue polypeptide: Uronate isomerase (470 aa).

The protein belongs to the metallo-dependent hydrolases superfamily. Uronate isomerase family.

It catalyses the reaction D-glucuronate = D-fructuronate. The catalysed reaction is aldehydo-D-galacturonate = keto-D-tagaturonate. It participates in carbohydrate metabolism; pentose and glucuronate interconversion. The protein is Uronate isomerase of Escherichia fergusonii (strain ATCC 35469 / DSM 13698 / CCUG 18766 / IAM 14443 / JCM 21226 / LMG 7866 / NBRC 102419 / NCTC 12128 / CDC 0568-73).